The chain runs to 1005 residues: MSWMFKRDPVWKYLQTVQYGVHGNFSRLSYPTFFPRFEFQDIIPPDDFLTSDEELDSVLFGTLRGHVVGLRYYTGVVNNNEMVALQREPNNPYDKNAIKVNNVNGNQVGYLKKELAAALAYIMDNKLAQIEGVVPYGANNAFTMPLQMTFWGKEENRKAVLDQLKKHGFKLGPAPKTLGFSLESGWGSGRAGPSYSMPVHAAIQMTTEQLKTEFDKLFEDLKEDDKTQEMEPAEAVETPLLPHQKQALAWMVSRENSRELPPFWELRNDLYYNTITNFSEKDQPENVHGGILADDMGLGKTLTAIAVILTNFHDGKPLPVERMKKNQVKKECNSSESDKPGRKDTIKKTDGLSKEGSRYSEEPSISDVKKNKYSMSELSSSQPKRKKIAVQYIESSDSEEIEISELPQKMKGKLKNVQSETKRVKVGPSKIKEDTAFACALTSSASTTTKKILKKGASAQRVQRKLMFEERPRTTLIICPLSVLSNWIDQFGQHIKSDVHLNFYVYYGPDRIRDPALLSKQDIVLTTYNILTHDYGTKGDSPLHSIRWLRVILDEGHAIRNPNAQQTKAVLDLEAERRWVLTGTPIQNSLKDLWSLLSFLKLKPFVDREWWHRTIQRPVTMGDEGGLRRLQSLIKNITLRRTKTSKIKGKPVLELPERPVFIQHITLSDEERKIYQSVKSEGKATIGRYFNEGTVLAHYADVLGLLLRLRQICCHTHLLTNTVSSSGPSGNDTPEELRKKLIKKMKLILSSGSDEECAICLDSLTVPVITHCAHVFCKPCICQCIQNEQPHAKCPLCRNDIHGDNLLECPPEELACDSEKKSNMEWTSSSKINALMHALIDLRTKNPNIKSLVVSQFTTFLSLIETPLKASGFVFTRLDGSMAQKKRVESIQCFQNTEAGSPTIMLLSLKAGGVGLNLCAASRVFLMDPAWNPAAEDQRFDRCHRLGQKQEVIITKFIVKDSVEENMLKIQNTKRELAAGAFGTKKNANEMKQAKINEIRTLIDL.

Arginine 27 carries the post-translational modification Omega-N-methylarginine. The DNA-binding element occupies 38–287 (EFQDIIPPDD…FSEKDQPENV (250 aa)). Lysine 112 is covalently cross-linked (Glycyl lysine isopeptide (Lys-Gly) (interchain with G-Cter in SUMO2)). Tyrosine 195 carries the post-translational modification Phosphotyrosine; by JAK2. Lysine 211 is covalently cross-linked (Glycyl lysine isopeptide (Lys-Gly) (interchain with G-Cter in SUMO2)). 294-301 (DDMGLGKT) contacts ATP. Positions 325–361 (KNQVKKECNSSESDKPGRKDTIKKTDGLSKEGSRYSE) are enriched in basic and acidic residues. A disordered region spans residues 325 to 385 (KNQVKKECNS…SELSSSQPKR (61 aa)). Polar residues predominate over residues 373–382 (YSMSELSSSQ). A phosphoserine mark is found at serine 395, serine 396, and serine 398. The 177-residue stretch at 427 to 603 (GPSKIKEDTA…WSLLSFLKLK (177 aa)) folds into the Helicase ATP-binding domain. Residues 554–557 (DEGH) carry the DEGH box motif. Phosphothreonine is present on threonine 733. An RING-type zinc finger spans residues 757-798 (CAICLDSLTVPVITHCAHVFCKPCICQCIQNEQPHAKCPLCR). Required for interaction with the RFBP isoform of ATP11B regions lie at residues 767–772 (PVITHC) and 791–796 (HAKCPL). Residues 834-999 (ALMHALIDLR…EMKQAKINEI (166 aa)) form the Helicase C-terminal domain. Residues 922-1005 (SRVFLMDPAW…INEIRTLIDL (84 aa)) form an interaction with SP1 and SP3 region.

The protein belongs to the SNF2/RAD54 helicase family. RAD16 subfamily. Interacts with SP1 and SP3 independently of DNA; the interaction with these transcriptional factors may be required for basal transcription of target genes. Interacts (via the RING-finger) with isoform RFBP of ATP11B. Progesterone-dependent isoform 1 interacts with EGR1; the interaction requires prior binding to DNA and represses c-Rel via a DNA looping mechanism. Interacts with GATA4. Interacts with PCNA; the interaction promotes polyubiquitination of PCNA through association with the UBE2B-RAD18 and UBE2V2-UBE2N ubiquitin ligase complexes. Interacts with RAD18, SHPRH, UBE2V2 and UBE2N. Post-translationally, phosphorylated on serine, threonine, and tyrosine residues. Tyr-195 phosphorylation is catalyzed by JAK2 in response to prolactin treatment. It is required for DNA binding. Isoform 1 is expressed preferentially in bladder, cervix, diaphragm, duodenum, epididymis, heart, kidney, liver, lung, ovary (granulosa cells), prostate, spleen, testis (predominantly in the Sertoli cells of the seminiferous tubules) and vagina. Isoform 2 is expressed preferentially in lactating mammary gland and uterine endometrium.

It localises to the cytoplasm. Its subcellular location is the nucleus. It is found in the nucleolus. The protein localises to the nucleoplasm. It catalyses the reaction S-ubiquitinyl-[E2 ubiquitin-conjugating enzyme]-L-cysteine + [acceptor protein]-L-lysine = [E2 ubiquitin-conjugating enzyme]-L-cysteine + N(6)-ubiquitinyl-[acceptor protein]-L-lysine.. It functions in the pathway protein modification; protein ubiquitination. In terms of biological role, has both helicase and E3 ubiquitin ligase activities. Possesses intrinsic ATP-dependent nucleosome-remodeling activity. This activity may be required for transcriptional activation or repression of specific target promoters. These may include the SERPINE1, to which this protein can bind directly. Mediates repression by c-Rel through a DNA-looping mechanism. Plays a role in error-free postreplication repair (PRR) of damaged DNA and maintains genomic stability through acting as a ubiquitin ligase for 'Lys-63'-linked polyubiquitination of chromatin-bound PCNA. Transcriptional regulator that mediates the ability of prolactin to augment progesterone-dependent transcription of the SCGB1A1/uteroglobin gene through a bipartite progesterone receptor half-site/overlapping Y-box combination (-38/-26) where progesterone activation is attenuated by nuclear factor Y binding. Regulation also involves two GC-rich sequences in the proximal promoter (positions -162/+90) and a RUSH/SMARCA3 site (positions -616/-611) in the 5'-untranslated region. The polypeptide is Helicase-like transcription factor (HLTF) (Oryctolagus cuniculus (Rabbit)).